The following is a 276-amino-acid chain: Omega-amidase NIT2 (276 aa).

Residues 4–248 (FRLSLVQFLV…ETVISADIDL (245 aa)) enclose the CN hydrolase domain. Glu43 serves as the catalytic Proton acceptor. Lys112 acts as the Proton donor in catalysis. The Nucleophile role is filled by Cys153.

It belongs to the carbon-nitrogen hydrolase superfamily. NIT1/NIT2 family. In terms of assembly, homodimer.

The protein resides in the cytoplasm. It carries out the reaction 2-oxoglutaramate + H2O = 2-oxoglutarate + NH4(+). The catalysed reaction is 2-oxosuccinamate + H2O = oxaloacetate + NH4(+). Functionally, has omega-amidase activity. The role of omega-amidase is to remove potentially toxic intermediates by converting 2-oxoglutaramate and 2-oxosuccinamate to biologically useful 2-oxoglutarate and oxaloacetate, respectively. This is Omega-amidase NIT2 (nit2) from Xenopus tropicalis (Western clawed frog).